Here is a 500-residue protein sequence, read N- to C-terminus: UDP-N-acetylmuramoyl-L-alanyl-D-glutamate--2,6-diaminopimelate ligase (500 aa).

Serine 38 serves as a coordination point for UDP-N-acetyl-alpha-D-muramoyl-L-alanyl-D-glutamate. 118–124 (GTNGKTS) lines the ATP pocket. UDP-N-acetyl-alpha-D-muramoyl-L-alanyl-D-glutamate contacts are provided by residues 160-161 (TT), serine 187, and arginine 195. Lysine 227 bears the N6-carboxylysine mark. Meso-2,6-diaminopimelate is bound by residues arginine 395, 419–422 (DNPR), glycine 471, and glutamate 475. Positions 419–422 (DNPR) match the Meso-diaminopimelate recognition motif motif.

The protein belongs to the MurCDEF family. MurE subfamily. Mg(2+) is required as a cofactor. Carboxylation is probably crucial for Mg(2+) binding and, consequently, for the gamma-phosphate positioning of ATP.

The protein localises to the cytoplasm. The catalysed reaction is UDP-N-acetyl-alpha-D-muramoyl-L-alanyl-D-glutamate + meso-2,6-diaminopimelate + ATP = UDP-N-acetyl-alpha-D-muramoyl-L-alanyl-gamma-D-glutamyl-meso-2,6-diaminopimelate + ADP + phosphate + H(+). The protein operates within cell wall biogenesis; peptidoglycan biosynthesis. Its function is as follows. Catalyzes the addition of meso-diaminopimelic acid to the nucleotide precursor UDP-N-acetylmuramoyl-L-alanyl-D-glutamate (UMAG) in the biosynthesis of bacterial cell-wall peptidoglycan. This Leptospira borgpetersenii serovar Hardjo-bovis (strain L550) protein is UDP-N-acetylmuramoyl-L-alanyl-D-glutamate--2,6-diaminopimelate ligase.